The primary structure comprises 601 residues: Elongation factor 4 (601 aa).

In terms of domain architecture, tr-type G spans 7 to 189 (DRIRNFSIIA…ALVTRLPAPK (183 aa)). GTP-binding positions include 19–24 (DHGKST) and 136–139 (NKVD).

The protein belongs to the TRAFAC class translation factor GTPase superfamily. Classic translation factor GTPase family. LepA subfamily.

It localises to the cell inner membrane. It catalyses the reaction GTP + H2O = GDP + phosphate + H(+). Required for accurate and efficient protein synthesis under certain stress conditions. May act as a fidelity factor of the translation reaction, by catalyzing a one-codon backward translocation of tRNAs on improperly translocated ribosomes. Back-translocation proceeds from a post-translocation (POST) complex to a pre-translocation (PRE) complex, thus giving elongation factor G a second chance to translocate the tRNAs correctly. Binds to ribosomes in a GTP-dependent manner. The chain is Elongation factor 4 from Granulibacter bethesdensis (strain ATCC BAA-1260 / CGDNIH1).